We begin with the raw amino-acid sequence, 353 residues long: Photosystem II D2 protein (353 aa).

N-acetylthreonine is present on Thr2. At Thr2 the chain carries Phosphothreonine. A helical transmembrane segment spans residues 41 to 61 (CAYFALGGWLTGTTFVTSWYT). His118 is a binding site for chlorophyll a. Residues 125 to 141 (GFMLRQFELARSVQLRP) form a helical membrane-spanning segment. The pheophytin a site is built by Gln130 and Asn143. A helical membrane pass occupies residues 153-166 (VFVSVFLIYPLGQS). His198 serves as a coordination point for chlorophyll a. Residues 208 to 228 (AALLCAIHGATVENTLFEDGD) form a helical membrane-spanning segment. Positions 215 and 262 each coordinate a plastoquinone. His215 serves as a coordination point for Fe cation. His269 lines the Fe cation pocket. A helical transmembrane segment spans residues 279-295 (GLWMSAIGVVGLALNLR).

It belongs to the reaction center PufL/M/PsbA/D family. As to quaternary structure, PSII is composed of 1 copy each of membrane proteins PsbA, PsbB, PsbC, PsbD, PsbE, PsbF, PsbH, PsbI, PsbJ, PsbK, PsbL, PsbM, PsbT, PsbX, PsbY, PsbZ, Psb30/Ycf12, at least 3 peripheral proteins of the oxygen-evolving complex and a large number of cofactors. It forms dimeric complexes. The cofactor is The D1/D2 heterodimer binds P680, chlorophylls that are the primary electron donor of PSII, and subsequent electron acceptors. It shares a non-heme iron and each subunit binds pheophytin, quinone, additional chlorophylls, carotenoids and lipids. There is also a Cl(-1) ion associated with D1 and D2, which is required for oxygen evolution. The PSII complex binds additional chlorophylls, carotenoids and specific lipids..

It localises to the plastid. It is found in the chloroplast thylakoid membrane. The enzyme catalyses 2 a plastoquinone + 4 hnu + 2 H2O = 2 a plastoquinol + O2. Photosystem II (PSII) is a light-driven water:plastoquinone oxidoreductase that uses light energy to abstract electrons from H(2)O, generating O(2) and a proton gradient subsequently used for ATP formation. It consists of a core antenna complex that captures photons, and an electron transfer chain that converts photonic excitation into a charge separation. The D1/D2 (PsbA/PsbD) reaction center heterodimer binds P680, the primary electron donor of PSII as well as several subsequent electron acceptors. D2 is needed for assembly of a stable PSII complex. This Zygnema circumcarinatum (Green alga) protein is Photosystem II D2 protein.